The following is a 488-amino-acid chain: Glutamyl-tRNA(Gln) amidotransferase subunit A (488 aa).

Active-site charge relay system residues include Lys78 and Ser153. The active-site Acyl-ester intermediate is Ser177.

The protein belongs to the amidase family. GatA subfamily. In terms of assembly, heterotrimer of A, B and C subunits.

The enzyme catalyses L-glutamyl-tRNA(Gln) + L-glutamine + ATP + H2O = L-glutaminyl-tRNA(Gln) + L-glutamate + ADP + phosphate + H(+). Functionally, allows the formation of correctly charged Gln-tRNA(Gln) through the transamidation of misacylated Glu-tRNA(Gln) in organisms which lack glutaminyl-tRNA synthetase. The reaction takes place in the presence of glutamine and ATP through an activated gamma-phospho-Glu-tRNA(Gln). This chain is Glutamyl-tRNA(Gln) amidotransferase subunit A, found in Solidesulfovibrio magneticus (strain ATCC 700980 / DSM 13731 / RS-1) (Desulfovibrio magneticus).